We begin with the raw amino-acid sequence, 169 residues long: E1B protein, small T-antigen (169 aa).

The protein belongs to the adenoviridae E1B 19 kDa protein family.

The polypeptide is E1B protein, small T-antigen (Canine adenovirus serotype 1 (strain CLL) (CAdV-1)).